Here is a 792-residue protein sequence, read N- to C-terminus: Endonuclease MutS2 (792 aa).

344–351 is a binding site for ATP; sequence GPNTGGKT. The region spanning 716-791 is the Smr domain; the sequence is IHLRGLHVEE…GLGVTVVYLE (76 aa).

This sequence belongs to the DNA mismatch repair MutS family. MutS2 subfamily. As to quaternary structure, homodimer. Binds to stalled ribosomes, contacting rRNA.

Its function is as follows. Endonuclease that is involved in the suppression of homologous recombination and thus may have a key role in the control of bacterial genetic diversity. Acts as a ribosome collision sensor, splitting the ribosome into its 2 subunits. Detects stalled/collided 70S ribosomes which it binds and splits by an ATP-hydrolysis driven conformational change. Acts upstream of the ribosome quality control system (RQC), a ribosome-associated complex that mediates the extraction of incompletely synthesized nascent chains from stalled ribosomes and their subsequent degradation. Probably generates substrates for RQC. This chain is Endonuclease MutS2, found in Thermomicrobium roseum (strain ATCC 27502 / DSM 5159 / P-2).